The primary structure comprises 420 residues: Tyrosine--tRNA ligase (420 aa).

Position 38 (Tyr-38) interacts with L-tyrosine. The 'HIGH' region signature appears at 43 to 52 (PTGDSLHIGH). L-tyrosine-binding residues include Tyr-169 and Gln-173. The 'KMSKS' region motif lies at 231-235 (KFGKS). Lys-234 contacts ATP. The S4 RNA-binding domain maps to 353 to 419 (KNIVEFLVET…GKRKYTLVKI (67 aa)).

It belongs to the class-I aminoacyl-tRNA synthetase family. TyrS type 1 subfamily. As to quaternary structure, homodimer.

It localises to the cytoplasm. It catalyses the reaction tRNA(Tyr) + L-tyrosine + ATP = L-tyrosyl-tRNA(Tyr) + AMP + diphosphate + H(+). In terms of biological role, catalyzes the attachment of tyrosine to tRNA(Tyr) in a two-step reaction: tyrosine is first activated by ATP to form Tyr-AMP and then transferred to the acceptor end of tRNA(Tyr). This chain is Tyrosine--tRNA ligase, found in Lactobacillus johnsonii (strain CNCM I-12250 / La1 / NCC 533).